A 1174-amino-acid chain; its full sequence is Probable DNA-directed RNA polymerase I subunit RPA2 (1174 aa).

The segment covering 1-16 (MSFQTLERERTFKNPP) has biased composition (basic and acidic residues). Residues 1-23 (MSFQTLERERTFKNPPKDGTSFP) are disordered. A C4-type zinc finger spans residues 1089–1118 (CRDCGSIISIMSTISMNGVGSASEVRCRSC).

It belongs to the RNA polymerase beta chain family. In terms of assembly, component of the RNA polymerase I (Pol I) complex consisting of 14 subunits.

It localises to the nucleus. Its subcellular location is the nucleolus. It catalyses the reaction RNA(n) + a ribonucleoside 5'-triphosphate = RNA(n+1) + diphosphate. DNA-dependent RNA polymerase catalyzes the transcription of DNA into RNA using the four ribonucleoside triphosphates as substrates. Second largest core component of RNA polymerase I which synthesizes ribosomal RNA precursors. Proposed to contribute to the polymerase catalytic activity and forms the polymerase active center together with the largest subunit. Pol I is composed of mobile elements and RPA2 is part of the core element with the central large cleft and probably a clamp element that moves to open and close the cleft. The protein is Probable DNA-directed RNA polymerase I subunit RPA2 (rpa2) of Schizosaccharomyces pombe (strain 972 / ATCC 24843) (Fission yeast).